An 833-amino-acid polypeptide reads, in one-letter code: Vacuolar protein sorting-associated protein 16 homolog (833 aa).

It belongs to the VPS16 family. As to quaternary structure, component of the homotypic fusion and vacuole protein sorting (HOPS) complex, composed of Vps16A, car/Vps33A, dor/Vps18, Vps39, Vps11 and lt/Vps41. Interacts with Syx17 (via SNARE domain); the interaction may involve multiple components of the HOPS complex and may promote assembly of the Syx17-Snap29-Vamp7 trans-SNARE complex. Component of the class C core vacuole/endosome tethering (CORVET) complex composed of at least Vps8, dor/Vps18, car/Vps33A and Vps16A; unlike in other species, Vps11 is not part of the Drosophila complex. Due to the reduced number of components the Drosophila CORVET complex is often referred to as the miniCORVET complex. The tethering complex core made up of Vps16A, car/Vps33A and dor/Vps18 and shared by both HOPS and CORVET, preferentially associates with CORVET-specific Vps8 over HOPS-specific lt/Vps41. Interacts with Rab2 (GTP-bound form).

The protein localises to the late endosome membrane. The protein resides in the lysosome membrane. It is found in the cytoplasmic vesicle. Its subcellular location is the autophagosome. Its function is as follows. Core component of the class C core vacuole/endosome tethering (CORVET) and the homotypic fusion and vacuole protein sorting (HOPS) tethering complexes involved in endo-lysosomal vesicle trafficking and lysosome biogenesis. The CORVET complex facilitates docking and fusion of endosomal vesicles during endosome maturation, acts upstream of HOPS, but is not involved in autophagic flux. The CORVET complex may cooperate with the early endosomal tether Rbsn-5 to mediate endosomal fusion. The HOPS complex facilitates docking and fusion of lysosomes with late endosomes and several other types of vesicles. The HOPS complex is also involved in autophagy and crinophagy (the elimination of unused secretory granules through their fusion with lysosomes). The HOPS complex mediates autophagocitic flux, probably by binding autophagosome-associated Syx17/syntaxin 17, promoting assembly of the trans-SNARE complex and instigating autophagosome-lysosome fusion. Independent of Syx17/syntaxin 17, HOPS is involved in biosynthetic transport to lysosomes and lysosome-related organelles such as eye-pigment granules. Required for endocytic degradation of boss/bride of sevenless and N/Notch in developing ommatidia. This Drosophila melanogaster (Fruit fly) protein is Vacuolar protein sorting-associated protein 16 homolog.